The primary structure comprises 330 residues: MTAEIAVLGGGAWGTALAQMLASDGQDVLLWARESEVVAEVNADHLNSIYLPGARLAENIKATGEVSDLSAIPTLLVVTPAQHMGAVLKTLPENPRDLVLCSKGIEQDTGRLMNDVAAEACPDSEIAILSGPTFAHEVAAGLPTAVTLACSSREQWERLKPLIARPAFRPYYSDDVSGAEIGGAVKNVLAIACGVVDGLGLGQNARAALIARGYAEMLRFGEALGAQAETLAGLCGLGDLVLTCSSTSSRNFSLGKALGEGRTAADLMADRTTVAEGAYTAPVLAELAEAKGVDMPIVQAVNRIIAGADAQAVVAQLLARPLRAEHESDA.

The NADPH site is built by Trp13, Arg33, and Lys103. Sn-glycerol 3-phosphate contacts are provided by Lys103, Gly131, and Thr133. Ala135 contacts NADPH. Sn-glycerol 3-phosphate is bound by residues Lys186, Asp239, Ser249, Arg250, and Asn251. The active-site Proton acceptor is Lys186. Arg250 contacts NADPH. 2 residues coordinate NADPH: Val274 and Glu276.

This sequence belongs to the NAD-dependent glycerol-3-phosphate dehydrogenase family.

It localises to the cytoplasm. It catalyses the reaction sn-glycerol 3-phosphate + NAD(+) = dihydroxyacetone phosphate + NADH + H(+). The enzyme catalyses sn-glycerol 3-phosphate + NADP(+) = dihydroxyacetone phosphate + NADPH + H(+). Its pathway is membrane lipid metabolism; glycerophospholipid metabolism. Catalyzes the reduction of the glycolytic intermediate dihydroxyacetone phosphate (DHAP) to sn-glycerol 3-phosphate (G3P), the key precursor for phospholipid synthesis. This chain is Glycerol-3-phosphate dehydrogenase [NAD(P)+], found in Erythrobacter litoralis (strain HTCC2594).